The chain runs to 160 residues: Endoribonuclease YbeY (160 aa).

3 residues coordinate Zn(2+): His121, His125, and His131.

It belongs to the endoribonuclease YbeY family. Zn(2+) is required as a cofactor.

It is found in the cytoplasm. Functionally, single strand-specific metallo-endoribonuclease involved in late-stage 70S ribosome quality control and in maturation of the 3' terminus of the 16S rRNA. In Hydrogenovibrio crunogenus (strain DSM 25203 / XCL-2) (Thiomicrospira crunogena), this protein is Endoribonuclease YbeY.